A 241-amino-acid polypeptide reads, in one-letter code: Cell division cycle-associated protein 4 (241 aa).

The 48-residue stretch at 30–77 (YSLQRQSLLDMSLVKLQLCHMLVEPNLCRSVLIANTVRQIQEEMTQDG) folds into the SERTA domain.

As to expression, highest levels of expression in the pancreas, thymus, testis, spleen, liver, placenta and leukocytes. Relatively low levels in the lung, kidney, prostate, ovary, small intestine and colon. Hardly detectable, if at all, in the brain, skeletal muscle and heart.

The protein resides in the nucleus. Its function is as follows. May participate in the regulation of cell proliferation through the E2F/RB pathway. May be involved in molecular regulation of hematopoietic stem cells and progenitor cell lineage commitment and differentiation. The protein is Cell division cycle-associated protein 4 (CDCA4) of Homo sapiens (Human).